We begin with the raw amino-acid sequence, 493 residues long: UPF0699 transmembrane protein YdbT (493 aa).

6 helical membrane-spanning segments follow: residues 18 to 38 (CHTI…VYIV), 46 to 66 (FYGA…SIIK), 188 to 208 (LMAA…FALI), 232 to 252 (IGIY…FSIA), 370 to 390 (VIFS…WGYL), and 393 to 413 (ILLP…AWTI).

The protein belongs to the UPF0699 family.

The protein resides in the cell membrane. The protein is UPF0699 transmembrane protein YdbT (ydbT) of Bacillus subtilis (strain 168).